The chain runs to 876 residues: GATOR2 complex protein MIOS (876 aa).

WD repeat units follow at residues 59–101 (SDTP…NSKS), 112–156 (KHAR…SPEA), 182–222 (GQND…QKTF), 224–262 (NTKA…KPVF), 266–307 (EQPK…MPFG), and 400–440 (RAQS…KQYT). The C4-type zinc-finger motif lies at 738–784 (VSCNFCGKSISYSCSAMPHQGRGFSQYGVSGSPTKSKVTSCPGCRKP). Residues Cys740, Cys743, Cys778, Cys781, Cys791, Cys830, Cys833, His835, His838, His841, Cys852, Cys857, and Cys861 each coordinate Zn(2+). The segment at 785–866 (LPRCALCLMN…CTCKCMQLDT (82 aa)) adopts an RING-type; atypical zinc-finger fold.

The protein belongs to the WD repeat mio family. As to quaternary structure, component of the GATOR2 subcomplex, composed of MIOS, SEC13, SEH1L, WDR24 and WDR59. The GATOR2 complex interacts with CASTOR1 and CASTOR2; the interaction is negatively regulated by arginine. The GATOR2 complex interacts with SESN1, SESN2 and SESN3; the interaction is negatively regulated by amino acids. Interacts with SAR1; the interaction is direct, disrupted by leucine and mediates the interaction of SAR1 with the GATOR2 complex to negatively regulate the TORC1 signaling upon leucine deprivation.

It localises to the lysosome membrane. The GATOR2 complex is negatively regulated by the upstream amino acid sensors CASTOR1 and SESN2, which sequester the GATOR2 complex in absence of amino acids. In the presence of abundant amino acids, GATOR2 is released from CASTOR1 and SESN2 and activated. Functionally, as a component of the GATOR2 complex, functions as an activator of the amino acid-sensing branch of the mTORC1 signaling pathway. The GATOR2 complex indirectly activates mTORC1 through the inhibition of the GATOR1 subcomplex. GATOR2 probably acts as an E3 ubiquitin-protein ligase toward GATOR1. In the presence of abundant amino acids, the GATOR2 complex mediates ubiquitination of the NPRL2 core component of the GATOR1 complex, leading to GATOR1 inactivation. In the absence of amino acids, GATOR2 is inhibited, activating the GATOR1 complex. Within the GATOR2 complex, MIOS is required to prevent autoubiquitination of WDR24, the catalytic subunit of the complex. In Danio rerio (Zebrafish), this protein is GATOR2 complex protein MIOS.